The following is a 318-amino-acid chain: Cobalamin biosynthesis protein CobD (318 aa).

5 consecutive transmembrane segments (helical) span residues 56 to 76 (VLWLLVVGITWLVSWGFLWLM), 78 to 98 (EINPWLGWLAQVWMIYTLLAG), 153 to 173 (VDGVIAPLFFLMLGGAPLAMA), 204 to 224 (LANWLPARLSWVLLSAAAWLI), and 298 to 318 (MMASLLALLLFALTHLLLVGI).

It belongs to the CobD/CbiB family.

Its subcellular location is the cell membrane. The protein operates within cofactor biosynthesis; adenosylcobalamin biosynthesis. Functionally, converts cobyric acid to cobinamide by the addition of aminopropanol on the F carboxylic group. This chain is Cobalamin biosynthesis protein CobD, found in Yersinia enterocolitica serotype O:8 / biotype 1B (strain NCTC 13174 / 8081).